The following is a 615-amino-acid chain: Delta(14)-sterol reductase LBR (615 aa).

One can recognise a Tudor domain in the interval M1–Q62. At M1–G211 the chain is on the nuclear side. Residues N52 to A109 are disordered. K55 carries the post-translational modification N6-acetyllysine. The residue at position 58 (T58) is a Phosphothreonine. 2 positions are modified to phosphoserine: S59 and S67. S71 and S86 each carry phosphoserine; by CDK1. A compositionally biased stretch (basic residues) spans S73 to S86. Phosphoserine is present on residues S97 and S99. A Phosphothreonine modification is found at T118. S128 bears the Phosphoserine mark. At T200 the chain carries Phosphothreonine. A run of 8 helical transmembrane segments spans residues V212–M232, V258–G278, F299–F319, F326–M346, F386–A406, I447–I467, E481–F501, and P561–V581. An N6-acetyllysine mark is found at K594 and K601.

Belongs to the ERG4/ERG24 family. As to quaternary structure, interacts with CBX5. Interacts with DNA. Interaction with DNA is sequence independent with higher affinity for supercoiled and relaxed circular DNA than linear DNA. Interacts with lamin B. Interacts with CLNK. Interacts with TMEM147; promoting LBR localization to the nucleus inner membrane. Post-translationally, phosphorylated by CDK1 in mitosis when the inner nuclear membrane breaks down into vesicles that dissociate from the lamina and the chromatin. It is phosphorylated by different protein kinases in interphase when the membrane is associated with these structures. Phosphorylation of LBR and HP1 proteins may be responsible for some of the alterations in chromatin organization and nuclear structure which occur at various times during the cell cycle. Phosphorylated by SRPK1. In late anaphase LBR is dephosphorylated, probably by PP1 and/or PP2A, allowing reassociation with chromatin. As to expression, expressed in the bone marrow, liver, heart, adrenal gland, lung, placenta and uterus. Expressed in osteoclasts and osteoblast-like cells.

It is found in the nucleus inner membrane. It localises to the endoplasmic reticulum membrane. The protein resides in the cytoplasm. Its subcellular location is the nucleus. It catalyses the reaction 5alpha-cholest-8,14-dien-3beta-ol + NADPH + H(+) = 5alpha-cholest-8-en-3beta-ol + NADP(+). The enzyme catalyses 4,4-dimethyl-5alpha-cholesta-8,24-dien-3beta-ol + NADP(+) = 4,4-dimethyl-5alpha-cholesta-8,14,24-trien-3beta-ol + NADPH + H(+). The catalysed reaction is 4,4-dimethyl-8,14-cholestadien-3beta-ol + NADPH + H(+) = 4,4-dimethyl-5alpha-cholest-8-en-3beta-ol + NADP(+). It participates in steroid biosynthesis; cholesterol biosynthesis. In terms of biological role, catalyzes the reduction of the C14-unsaturated bond of lanosterol, as part of the metabolic pathway leading to cholesterol biosynthesis. Plays a critical role in myeloid cell cholesterol biosynthesis which is essential to both myeloid cell growth and functional maturation. Mediates the activation of NADPH oxidases, perhaps by maintaining critical levels of cholesterol required for membrane lipid raft formation during neutrophil differentiation. Anchors the lamina and the heterochromatin to the inner nuclear membrane. This is Delta(14)-sterol reductase LBR (LBR) from Homo sapiens (Human).